A 568-amino-acid chain; its full sequence is Matrix metalloproteinase-21 (568 aa).

Positions 1–24 (MLAASVLRLTLPLCWLVAPQPTQP) are cleaved as a signal peptide. The propeptide occupies 25-143 (ERLFHSRDRS…SLGLRPRARQ (119 aa)). The Cysteine switch motif lies at 110 to 117 (PRCGVPDT). Zn(2+)-binding residues include Cys-112 and His-282. Glu-283 is an active-site residue. 2 residues coordinate Zn(2+): His-286 and His-292. Cys-328 and Cys-559 form a disulfide bridge. 4 Hemopexin repeats span residues 329–388 (KGSF…WRGI), 390–446 (TQSI…FPGI), 447–495 (PSPL…FPAI), and 502–558 (FRNL…WFDV). An N-linked (GlcNAc...) asparagine glycan is attached at Asn-371.

The protein belongs to the peptidase M10A family. Zn(2+) serves as cofactor. Requires Ca(2+) as cofactor. In terms of processing, the precursor is cleaved by a furin endopeptidase.

It localises to the secreted. In terms of biological role, plays a specialized role in the generation of left-right asymmetry during embryogenesis. May act as a negative regulator of the NOTCH-signaling pathway. Cleaves alpha-1-antitrypsin. The chain is Matrix metalloproteinase-21 (Mmp21) from Mus musculus (Mouse).